The sequence spans 213 residues: Thiamine-phosphate synthase (213 aa).

4-amino-2-methyl-5-(diphosphooxymethyl)pyrimidine-binding positions include 38 to 42 (QLRIK) and Asn70. Mg(2+) is bound by residues Asp71 and Asp90. A 4-amino-2-methyl-5-(diphosphooxymethyl)pyrimidine-binding site is contributed by Ser109. 135–137 (TQT) is a 2-[(2R,5Z)-2-carboxy-4-methylthiazol-5(2H)-ylidene]ethyl phosphate binding site. Lys138 lines the 4-amino-2-methyl-5-(diphosphooxymethyl)pyrimidine pocket. 2-[(2R,5Z)-2-carboxy-4-methylthiazol-5(2H)-ylidene]ethyl phosphate is bound by residues Gly168 and 188 to 189 (VS).

The protein belongs to the thiamine-phosphate synthase family. Mg(2+) serves as cofactor.

The enzyme catalyses 2-[(2R,5Z)-2-carboxy-4-methylthiazol-5(2H)-ylidene]ethyl phosphate + 4-amino-2-methyl-5-(diphosphooxymethyl)pyrimidine + 2 H(+) = thiamine phosphate + CO2 + diphosphate. It catalyses the reaction 2-(2-carboxy-4-methylthiazol-5-yl)ethyl phosphate + 4-amino-2-methyl-5-(diphosphooxymethyl)pyrimidine + 2 H(+) = thiamine phosphate + CO2 + diphosphate. The catalysed reaction is 4-methyl-5-(2-phosphooxyethyl)-thiazole + 4-amino-2-methyl-5-(diphosphooxymethyl)pyrimidine + H(+) = thiamine phosphate + diphosphate. It participates in cofactor biosynthesis; thiamine diphosphate biosynthesis; thiamine phosphate from 4-amino-2-methyl-5-diphosphomethylpyrimidine and 4-methyl-5-(2-phosphoethyl)-thiazole: step 1/1. Its function is as follows. Condenses 4-methyl-5-(beta-hydroxyethyl)thiazole monophosphate (THZ-P) and 2-methyl-4-amino-5-hydroxymethyl pyrimidine pyrophosphate (HMP-PP) to form thiamine monophosphate (TMP). The chain is Thiamine-phosphate synthase from Pectobacterium atrosepticum (strain SCRI 1043 / ATCC BAA-672) (Erwinia carotovora subsp. atroseptica).